Consider the following 680-residue polypeptide: MSQENHVDVPRKRIRIDQSESSRNLERNGLEDEANAPSDLSGQKFYMTESDVGIDAFLNPNLPSIDGIIKARFTDFAVFEVDTDGNIVHLTDMEAHDPILSKATGDKETEDAKDSSNQDISNDQKAPSFKEQEPATLPILPNDLQSIIPKGIGNEFIQSLHKLSVGEITDPISLILPENTPPMDKGQRTILHQFIRNNFSGLESSTKGNGTFTVSKTTRKNQPRSRRDPRLSWKALGGEYCHFHLYKENRDSMDCLGKIARLLKVPTRTLSIAGTKDRRGVTCQRVAIHHVRASRLAQLNSGSLKNSTYGFLLGNYSYKNSNLRLGDLKGNEFHIVVRNVITPKEKVVEALNSLKEHGFINYFGLQRFGTSSVGTHTIGVRLLQSDWKGAVDLILSPRPEHTGSVKEAIDLWHSTHDAEASLRILPRRMIAESSILETWSRSGNQTDYLGAFQRIPRHLRSIYPHAYQSYVWNRVASWRIKNLGDRPVVGDLVYSTESNGLSQKSPIVDPEAPDLLEDLPVSSKLSARPIEEDEVNNFSIYDIVLPLPGRNVIYPKNETFDIYKSVMNEASLDPLNMSRKDRELSLPGDYRKLLVRPENMEFNFIKYDNMEQQLILTDKDRLENRSISVSSEVGKHTAVTLKFVLPSSAYATMALREALRTATASGDQRMLMPAVLKDSI.

Composition is skewed to basic and acidic residues over residues 1 to 30 and 99 to 116; these read MSQE…RNGL and ILSK…KDSS. Disordered stretches follow at residues 1-42, 99-136, and 206-229; these read MSQE…DLSG, ILSK…EPAT, and TKGN…RRDP. Polar residues predominate over residues 206–216; that stretch reads TKGNGTFTVSK. Asp-277 acts as the Nucleophile in catalysis. One can recognise a TRUD domain in the interval 358 to 596; it reads GFINYFGLQR…PGDYRKLLVR (239 aa).

The protein belongs to the pseudouridine synthase TruD family.

The protein resides in the nucleus. It is found in the cytoplasm. It carries out the reaction uridine in 5S rRNA = pseudouridine in 5S rRNA. The catalysed reaction is uridine in snRNA = pseudouridine in snRNA. The enzyme catalyses uridine(13) in tRNA = pseudouridine(13) in tRNA. It catalyses the reaction a uridine in mRNA = a pseudouridine in mRNA. Its function is as follows. Catalyzes pseudouridylation at position 35 in U2 snRNA stem-loop II region which induces particular conformation of the mRNA-U2 snRNA duplex and places the nucleophile in an accessible position for the first step of splicing. Also catalyzes pseudouridylation at position 56 in U2 snRNA. Also catalyzes pseudouridylation at position 50 in 5S rRNA, position 13 in cytoplasmic tRNAs, and position 35 in pre-tRNA(Tyr). Pseudouridine residues in tRNAs may stabilize the local RNA conformation, favor interactions with protein partners and play an important role in the stabilization of the codon-anticodon interaction with mRNA. Also catalyzes pseudouridylation of mRNAs in response to heat shock: mediates pseudouridylation of mRNAs with the consensus sequence 5'-UGUAR-3'. The protein is Multisubstrate pseudouridine synthase 7 (pus7) of Schizosaccharomyces pombe (strain 972 / ATCC 24843) (Fission yeast).